Here is a 1264-residue protein sequence, read N- to C-terminus: Valine--tRNA ligase (1264 aa).

Ser-2 bears the N-acetylserine mark. The region spanning 89 to 219 (GSRAAVLVQQ…YSGARSVTQQ (131 aa)) is the GST C-terminal domain. The span at 218–230 (QQPGSEITAPQKT) shows a compositional bias: polar residues. Residues 218–296 (QQPGSEITAP…GEKKDVSGTM (79 aa)) are disordered. Composition is skewed to basic and acidic residues over residues 234–248 (LKKE…EKFQ) and 260–275 (HGEK…KRDP). The short motif at 344 to 354 (PNVTGSLHLGH) is the 'HIGH' region element. A phosphoserine mark is found at Ser-437 and Ser-527. Lys-645 carries the post-translational modification N6-acetyllysine. Positions 862–866 (KMSKS) match the 'KMSKS' region motif. Residue Lys-865 coordinates ATP.

This sequence belongs to the class-I aminoacyl-tRNA synthetase family. In terms of assembly, forms high-molecular-mass aggregates with elongation factor 1.

The catalysed reaction is tRNA(Val) + L-valine + ATP = L-valyl-tRNA(Val) + AMP + diphosphate. With respect to regulation, can be regulated by protein kinase C-dependent phosphorylation. The sequence is that of Valine--tRNA ligase (Vars1) from Rattus norvegicus (Rat).